The chain runs to 250 residues: 5-oxoprolinase subunit A (250 aa).

Belongs to the LamB/PxpA family. In terms of assembly, forms a complex composed of PxpA, PxpB and PxpC.

It carries out the reaction 5-oxo-L-proline + ATP + 2 H2O = L-glutamate + ADP + phosphate + H(+). Its function is as follows. Catalyzes the cleavage of 5-oxoproline to form L-glutamate coupled to the hydrolysis of ATP to ADP and inorganic phosphate. The protein is 5-oxoprolinase subunit A of Pseudomonas fluorescens (strain Pf0-1).